Reading from the N-terminus, the 288-residue chain is ATP synthase gamma chain (288 aa).

This sequence belongs to the ATPase gamma chain family. In terms of assembly, F-type ATPases have 2 components, CF(1) - the catalytic core - and CF(0) - the membrane proton channel. CF(1) has five subunits: alpha(3), beta(3), gamma(1), delta(1), epsilon(1). CF(0) has three main subunits: a, b and c.

It localises to the cell inner membrane. Its function is as follows. Produces ATP from ADP in the presence of a proton gradient across the membrane. The gamma chain is believed to be important in regulating ATPase activity and the flow of protons through the CF(0) complex. This chain is ATP synthase gamma chain, found in Vibrio parahaemolyticus serotype O3:K6 (strain RIMD 2210633).